The primary structure comprises 530 residues: Autoinducer-2 kinase (530 aa).

Belongs to the FGGY kinase family.

It localises to the cytoplasm. The enzyme catalyses (S)-4,5-dihydroxypentane-2,3-dione + ATP = (2S)-2-hydroxy-3,4-dioxopentyl phosphate + ADP + H(+). In terms of biological role, catalyzes the phosphorylation of autoinducer-2 (AI-2) to phospho-AI-2, which subsequently inactivates the transcriptional regulator LsrR and leads to the transcription of the lsr operon. Phosphorylates the ring-open form of (S)-4,5-dihydroxypentane-2,3-dione (DPD), which is the precursor to all AI-2 signaling molecules, at the C5 position. The chain is Autoinducer-2 kinase from Escherichia coli O9:H4 (strain HS).